The primary structure comprises 94 residues: RNA-binding protein Hfq (94 aa).

Positions 9 to 68 constitute a Sm domain; sequence DPFLNALRRERVPVSIYLVNGIKLQGQVESFDQFVILLKNTVSQMVYKHAISTVVPARPF. The tract at residues 70–94 is disordered; sequence VSAHHSSPAPTPAGGFNGQNDETSE.

It belongs to the Hfq family. As to quaternary structure, homohexamer.

In terms of biological role, RNA chaperone that binds small regulatory RNA (sRNAs) and mRNAs to facilitate mRNA translational regulation in response to envelope stress, environmental stress and changes in metabolite concentrations. Also binds with high specificity to tRNAs. The protein is RNA-binding protein Hfq of Shewanella woodyi (strain ATCC 51908 / MS32).